The primary structure comprises 1411 residues: Protein RhsB (1411 aa).

Tandem repeats lie at residues Gly-330–Thr-352, Gly-353–Ala-374, Gly-375–Asp-417, Gly-418–Ala-438, Gly-439–Asp-460, Gly-461–Asp-481, Gly-482–Asp-502, Gly-503–Thr-525, Gly-526–Ser-546, Gly-547–Glu-567, Gly-568–Gln-588, Gly-589–Asp-609, Gly-610–Gly-629, Gly-630–Asn-650, Gly-651–Asp-671, Gly-672–Glu-691, Gly-692–Lys-711, Gly-712–Glu-734, Gly-735–His-758, Gly-808–Phe-828, Gly-829–Ser-850, Leu-851–Pro-871, Arg-872–Asn-894, Leu-895–Ala-930, Arg-931–Thr-959, Asp-960–Glu-984, Glu-985–Ser-1019, and Gly-1162–Gln-1186. Positions Gly-330–Gln-1186 are 28 X approximate tandem repeats.

This sequence belongs to the RHS family.

Its function is as follows. Rhs elements have a nonessential function. They may play an important role in the natural ecology of the cell. The polypeptide is Protein RhsB (rhsB) (Escherichia coli (strain K12)).